Consider the following 79-residue polypeptide: Large ribosomal subunit protein bL31 (79 aa).

The protein belongs to the bacterial ribosomal protein bL31 family. Type A subfamily. As to quaternary structure, part of the 50S ribosomal subunit.

Its function is as follows. Binds the 23S rRNA. In Synechococcus sp. (strain CC9902), this protein is Large ribosomal subunit protein bL31.